The sequence spans 128 residues: Glycine cleavage system H protein (128 aa).

The Lipoyl-binding domain maps to 24–106; sequence VFCVGITDHA…YDEGWLFRIR (83 aa). Position 65 is an N6-lipoyllysine (lysine 65).

It belongs to the GcvH family. In terms of assembly, the glycine cleavage system is composed of four proteins: P, T, L and H. Requires (R)-lipoate as cofactor.

The glycine cleavage system catalyzes the degradation of glycine. The H protein shuttles the methylamine group of glycine from the P protein to the T protein. This chain is Glycine cleavage system H protein, found in Edwardsiella ictaluri (strain 93-146).